Here is a 682-residue protein sequence, read N- to C-terminus: Probable xyloglucan glycosyltransferase 6 (682 aa).

2 helical membrane passes run 109-129 (LIKG…AAYF) and 173-193 (IVLF…CFWI). Asp-260 is a catalytic residue. Asp-319 and Asp-321 together coordinate substrate. Asp-413 is an active-site residue. 2 helical membrane-spanning segments follow: residues 491–511 (LILP…TMFF) and 516–536 (LPSW…IIPA). Ser-608 is subject to Phosphoserine. 2 helical membrane passes run 632 to 651 (LYRT…VRSL) and 657 to 677 (IHFY…LDLI).

The protein belongs to the glycosyltransferase 2 family. Plant cellulose synthase-like C subfamily. In terms of assembly, homodimer. As to expression, mainly expressed in flowers and seeds, and, to a lower extent, in seedlings, roots, leaves and stems.

The protein resides in the golgi apparatus membrane. In terms of biological role, probable beta-1,4-glucan synthase rather involved in the synthesis of the xyloglucan backbone than cellulose. Seems to work simultaneously with xyloglucan 6-xylosyltransferase. Xyloglucan is a noncellulosic polysaccharides of plant cell wall and consists of a glucan backbone substituted by xylose, galactose and fucose. This Arabidopsis thaliana (Mouse-ear cress) protein is Probable xyloglucan glycosyltransferase 6.